A 109-amino-acid polypeptide reads, in one-letter code: uncharacterized protein (109 aa).

The first 28 residues, 1–28, serve as a signal peptide directing secretion; it reads MNMLAYFLYCRQLLLAVVLIEFPPRLCG.

This is an uncharacterized protein from Homo sapiens (Human).